The primary structure comprises 188 residues: Probable nicotinate-nucleotide adenylyltransferase (188 aa).

This sequence belongs to the NadD family.

It catalyses the reaction nicotinate beta-D-ribonucleotide + ATP + H(+) = deamido-NAD(+) + diphosphate. It functions in the pathway cofactor biosynthesis; NAD(+) biosynthesis; deamido-NAD(+) from nicotinate D-ribonucleotide: step 1/1. Its function is as follows. Catalyzes the reversible adenylation of nicotinate mononucleotide (NaMN) to nicotinic acid adenine dinucleotide (NaAD). This Listeria monocytogenes serotype 4a (strain HCC23) protein is Probable nicotinate-nucleotide adenylyltransferase.